A 401-amino-acid chain; its full sequence is MAKAIKKVVLAYSGGLDTSVILKWIAVTYGCEVVTLTADLGQEEDLDGVDAKALRTGASRAYVEDLREEFARDFIFPMMRSGAVYEGRYLLGTSIARPLIAKRLVDIARAEGAQAVAHGATGKGNDQVRFELAVNALAPDLDVIAPWRIWDLRSRTDLTAFAEQHGIPLSTSSKQYSMDRNMLHCSFEGGELEDPWCEPGPNSHVMAVPVEQAPDTPEYITIEFKKGDAVAVNGEAMSPASIIRTLNTIGGRHGIGRLDMVENRFVGIKSRGVYETPGGTVLHIAHRDLEGICMDRESMHLRDQLIPRYSEAVYNGFWFAPEREAMQAFIDKTQETVNGTVRLKLYKGNAYPVGRTSPNTLYCHDLATFEDCATYDHADAAGFIKLQGLRVRGYAQRVKKD.

ATP is bound by residues Ala11–Ser19 and Ala38. Tyr89 and Ser94 together coordinate L-citrulline. Gly119 contacts ATP. The L-aspartate site is built by Thr121, Asn125, and Asp126. Position 125 (Asn125) interacts with L-citrulline. 5 residues coordinate L-citrulline: Arg129, Ser177, Ser186, Glu262, and Tyr274.

Belongs to the argininosuccinate synthase family. Type 1 subfamily. As to quaternary structure, homotetramer.

It localises to the cytoplasm. The catalysed reaction is L-citrulline + L-aspartate + ATP = 2-(N(omega)-L-arginino)succinate + AMP + diphosphate + H(+). Its pathway is amino-acid biosynthesis; L-arginine biosynthesis; L-arginine from L-ornithine and carbamoyl phosphate: step 2/3. The chain is Argininosuccinate synthase from Nitratidesulfovibrio vulgaris (strain DSM 19637 / Miyazaki F) (Desulfovibrio vulgaris).